We begin with the raw amino-acid sequence, 462 residues long: Glutamate--tRNA ligase 1 (462 aa).

Residues 8–18 carry the 'HIGH' region motif; that stretch reads PSPTGYLHIGG. Residues 236-240 carry the 'KMSKS' region motif; sequence KLSKR. Lys-239 provides a ligand contact to ATP.

The protein belongs to the class-I aminoacyl-tRNA synthetase family. Glutamate--tRNA ligase type 1 subfamily. In terms of assembly, monomer.

It is found in the cytoplasm. It carries out the reaction tRNA(Glu) + L-glutamate + ATP = L-glutamyl-tRNA(Glu) + AMP + diphosphate. Functionally, catalyzes the attachment of glutamate to tRNA(Glu) in a two-step reaction: glutamate is first activated by ATP to form Glu-AMP and then transferred to the acceptor end of tRNA(Glu). This is Glutamate--tRNA ligase 1 from Sulfurovum sp. (strain NBC37-1).